Reading from the N-terminus, the 50-residue chain is uncharacterized protein (50 aa).

This is an uncharacterized protein from Dryophytes versicolor (chameleon treefrog).